A 307-amino-acid polypeptide reads, in one-letter code: Urease accessory protein UreD (307 aa).

It belongs to the UreD family. As to quaternary structure, ureD, UreF and UreG form a complex that acts as a GTP-hydrolysis-dependent molecular chaperone, activating the urease apoprotein by helping to assemble the nickel containing metallocenter of UreC. The UreE protein probably delivers the nickel.

It localises to the cytoplasm. Functionally, required for maturation of urease via the functional incorporation of the urease nickel metallocenter. The chain is Urease accessory protein UreD from Prochlorococcus marinus (strain NATL1A).